A 722-amino-acid chain; its full sequence is Flagellar hook-associated protein 2 (722 aa).

2 disordered regions span residues 251–299 (NEES…VQEE) and 311–368 (KNEA…STGA). Residues 264–277 (APTSSHGNTASAAH) show a composition bias toward polar residues. Over residues 324–337 (GLEKYPAVDDKGDN) the composition is skewed to basic and acidic residues. The span at 344 to 358 (SQGTATHEGSGSSTD) shows a compositional bias: polar residues. Residues 660-710 (IRSNGVDERIKSTEKRVETYDKQLEKKERELRHKYHTMDGALRSLQKQSDA) are a coiled coil.

It belongs to the FliD family. In terms of assembly, homopentamer.

The protein resides in the periplasmic flagellum. The protein localises to the periplasm. Functionally, required for the morphogenesis and for the elongation of the flagellar filament by facilitating polymerization of the flagellin monomers at the tip of growing filament. Forms a capping structure, which prevents flagellin subunits (transported through the central channel of the flagellum) from leaking out without polymerization at the distal end. The polypeptide is Flagellar hook-associated protein 2 (fliD) (Treponema pallidum (strain Nichols)).